The sequence spans 804 residues: Probable replication endonuclease from prophage-like region 2 (804 aa).

Residues Tyr503 and Tyr507 each act as O-(5'-phospho-DNA)-tyrosine intermediate in the active site.

This sequence belongs to the phage GPA family.

Its function is as follows. Possible endonuclease which induces a single-strand cut and initiates DNA replication. In Salmonella typhi, this protein is Probable replication endonuclease from prophage-like region 2.